The following is a 350-amino-acid chain: ATPase GET3 (350 aa).

26 to 33 serves as a coordination point for ATP; sequence KGGVGKTT. Asp57 is an active-site residue. ATP is bound by residues Glu243 and Asn270. Residues Cys282 and Cys285 each coordinate Zn(2+).

Belongs to the arsA ATPase family. Homodimer. Component of the Golgi to ER traffic (GET) complex, which is composed of GET1, GET2 and GET3. Within the complex, GET1 and GET2 form a heterotetramer which is stabilized by phosphatidylinositol binding and which binds to the GET3 homodimer. Interacts with the chloride channel protein GEF1.

It is found in the cytoplasm. The protein localises to the endoplasmic reticulum. Its subcellular location is the golgi apparatus. Functionally, ATPase required for the post-translational delivery of tail-anchored (TA) proteins to the endoplasmic reticulum. Recognizes and selectively binds the transmembrane domain of TA proteins in the cytosol. This complex then targets to the endoplasmic reticulum by membrane-bound receptors GET1 and GET2, where the tail-anchored protein is released for insertion. This process is regulated by ATP binding and hydrolysis. ATP binding drives the homodimer towards the closed dimer state, facilitating recognition of newly synthesized TA membrane proteins. ATP hydrolysis is required for insertion. Subsequently, the homodimer reverts towards the open dimer state, lowering its affinity for the GET1-GET2 receptor, and returning it to the cytosol to initiate a new round of targeting. Cooperates with the HDEL receptor ERD2 to mediate the ATP-dependent retrieval of resident ER proteins that contain a C-terminal H-D-E-L retention signal from the Golgi to the ER. Involved in low-level resistance to the oxyanions arsenite and arsenate, and in heat tolerance. This chain is ATPase GET3, found in Candida albicans (strain SC5314 / ATCC MYA-2876) (Yeast).